We begin with the raw amino-acid sequence, 127 residues long: Fluoride-specific ion channel FluC (127 aa).

Helical transmembrane passes span Leu-2–Ile-22, Leu-35–Phe-55, Leu-68–Val-88, and Leu-104–Ile-124. The Na(+) site is built by Gly-75 and Thr-78.

This sequence belongs to the fluoride channel Fluc/FEX (TC 1.A.43) family.

The protein resides in the cell inner membrane. The catalysed reaction is fluoride(in) = fluoride(out). With respect to regulation, na(+) is not transported, but it plays an essential structural role and its presence is essential for fluoride channel function. Fluoride-specific ion channel. Important for reducing fluoride concentration in the cell, thus reducing its toxicity. This chain is Fluoride-specific ion channel FluC, found in Serratia proteamaculans (strain 568).